A 417-amino-acid chain; its full sequence is Acetate kinase (417 aa).

Residue asparagine 9 participates in Mg(2+) binding. An ATP-binding site is contributed by lysine 16. Arginine 90 lines the substrate pocket. Aspartate 147 functions as the Proton donor/acceptor in the catalytic mechanism. ATP contacts are provided by residues 207–211 (HIGNG), 282–284 (DLR), and 330–334 (GIGEN). Glutamate 384 is a Mg(2+) binding site.

The protein belongs to the acetokinase family. In terms of assembly, homodimer. Requires Mg(2+) as cofactor. Mn(2+) serves as cofactor.

Its subcellular location is the cytoplasm. It carries out the reaction acetate + ATP = acetyl phosphate + ADP. Its pathway is metabolic intermediate biosynthesis; acetyl-CoA biosynthesis; acetyl-CoA from acetate: step 1/2. In terms of biological role, catalyzes the formation of acetyl phosphate from acetate and ATP. Can also catalyze the reverse reaction. This Staphylococcus epidermidis (strain ATCC 35984 / DSM 28319 / BCRC 17069 / CCUG 31568 / BM 3577 / RP62A) protein is Acetate kinase.